A 157-amino-acid chain; its full sequence is Protein Smg (157 aa).

The protein belongs to the Smg family.

The sequence is that of Protein Smg from Escherichia coli O7:K1 (strain IAI39 / ExPEC).